Consider the following 610-residue polypeptide: Fimbrin (610 aa).

EF-hand domains are found at residues 7 to 42 (SEISEFKASFNQFDENGDGQISALELQKILTKCGEK) and 43 to 78 (VTGVEVRDMIKEVDTDGNGSIDFKEFLQVMQKARQH). Aspartate 20, asparagine 22, aspartate 24, glutamine 26, glutamate 31, aspartate 56, aspartate 58, asparagine 60, serine 62, and glutamate 67 together coordinate Ca(2+). 2 actin-binding regions span residues 102 to 365 (YSGS…NTHP) and 366 to 608 (ALEP…QVEM). 4 Calponin-homology (CH) domains span residues 116 to 232 (DEEK…KIGL), 260 to 365 (LPVE…NTHP), 379 to 488 (TREE…RGHV), and 501 to 608 (PIAD…QVEM).

Functionally, binds to actin. The protein is Fimbrin (fimA) of Dictyostelium discoideum (Social amoeba).